Here is a 258-residue protein sequence, read N- to C-terminus: Phosphate import ATP-binding protein PstB 2 (258 aa).

The ABC transporter domain maps to 12-253 (IQVRDLNFYY…PRQKQTEDYI (242 aa)). ATP is bound at residue 44–51 (GPSGCGKS).

It belongs to the ABC transporter superfamily. Phosphate importer (TC 3.A.1.7) family. In terms of assembly, the complex is composed of two ATP-binding proteins (PstB), two transmembrane proteins (PstC and PstA) and a solute-binding protein (PstS).

The protein resides in the cell inner membrane. It catalyses the reaction phosphate(out) + ATP + H2O = ADP + 2 phosphate(in) + H(+). Its function is as follows. Part of the ABC transporter complex PstSACB involved in phosphate import. Responsible for energy coupling to the transport system. In Pectobacterium atrosepticum (strain SCRI 1043 / ATCC BAA-672) (Erwinia carotovora subsp. atroseptica), this protein is Phosphate import ATP-binding protein PstB 2.